The chain runs to 549 residues: Lipase 1 (549 aa).

An N-terminal signal peptide occupies residues 1-15; that stretch reads MELALALSLIASVAA. A disulfide bridge connects residues C75 and C112. S224 functions as the Acyl-ester intermediate in the catalytic mechanism. Cysteines 283 and 292 form a disulfide. N329 carries an N-linked (GlcNAc...) asparagine glycan. E356 acts as the Charge relay system in catalysis. N366 is a glycosylation site (N-linked (GlcNAc...) asparagine). The active-site Charge relay system is H464.

It belongs to the type-B carboxylesterase/lipase family.

The enzyme catalyses a triacylglycerol + H2O = a diacylglycerol + a fatty acid + H(+). This Diutina rugosa (Yeast) protein is Lipase 1 (LIP1).